The chain runs to 203 residues: Protein GrpE (203 aa).

A compositionally biased stretch (basic and acidic residues) spans 1–10 (MSNESIKAEQ). Residues 1–20 (MSNESIKAEQDLIQEGVESE) are disordered.

Belongs to the GrpE family. As to quaternary structure, homodimer.

The protein localises to the cytoplasm. Participates actively in the response to hyperosmotic and heat shock by preventing the aggregation of stress-denatured proteins, in association with DnaK and GrpE. It is the nucleotide exchange factor for DnaK and may function as a thermosensor. Unfolded proteins bind initially to DnaJ; upon interaction with the DnaJ-bound protein, DnaK hydrolyzes its bound ATP, resulting in the formation of a stable complex. GrpE releases ADP from DnaK; ATP binding to DnaK triggers the release of the substrate protein, thus completing the reaction cycle. Several rounds of ATP-dependent interactions between DnaJ, DnaK and GrpE are required for fully efficient folding. The protein is Protein GrpE of Shewanella sp. (strain MR-7).